The primary structure comprises 266 residues: Methionine aminopeptidase 1 (266 aa).

His-88 is a substrate binding site. Residues Asp-106, Asp-117, and His-186 each coordinate a divalent metal cation. His-193 provides a ligand contact to substrate. A divalent metal cation is bound by residues Glu-219 and Glu-250.

It belongs to the peptidase M24A family. Methionine aminopeptidase type 1 subfamily. In terms of assembly, monomer. Co(2+) serves as cofactor. It depends on Zn(2+) as a cofactor. The cofactor is Mn(2+). Requires Fe(2+) as cofactor.

It carries out the reaction Release of N-terminal amino acids, preferentially methionine, from peptides and arylamides.. Removes the N-terminal methionine from nascent proteins. The N-terminal methionine is often cleaved when the second residue in the primary sequence is small and uncharged (Met-Ala-, Cys, Gly, Pro, Ser, Thr, or Val). Requires deformylation of the N(alpha)-formylated initiator methionine before it can be hydrolyzed. The protein is Methionine aminopeptidase 1 of Mycobacterium tuberculosis (strain CDC 1551 / Oshkosh).